A 138-amino-acid chain; its full sequence is ATP synthase epsilon chain (138 aa).

The protein belongs to the ATPase epsilon chain family. In terms of assembly, F-type ATPases have 2 components, CF(1) - the catalytic core - and CF(0) - the membrane proton channel. CF(1) has five subunits: alpha(3), beta(3), gamma(1), delta(1), epsilon(1). CF(0) has three main subunits: a, b and c.

The protein localises to the cell inner membrane. In terms of biological role, produces ATP from ADP in the presence of a proton gradient across the membrane. In Acidovorax ebreus (strain TPSY) (Diaphorobacter sp. (strain TPSY)), this protein is ATP synthase epsilon chain.